We begin with the raw amino-acid sequence, 285 residues long: Nucleotide-binding protein NTHI1314 (285 aa).

An ATP-binding site is contributed by 8 to 15 (GRSGAGKS). 56–59 (DIRN) is a binding site for GTP.

It belongs to the RapZ-like family.

Its function is as follows. Displays ATPase and GTPase activities. The polypeptide is Nucleotide-binding protein NTHI1314 (Haemophilus influenzae (strain 86-028NP)).